A 238-amino-acid polypeptide reads, in one-letter code: Adenylate dimethylallyltransferase (238 aa).

Belongs to the isopentenyl transferase family.

It catalyses the reaction dimethylallyl diphosphate + AMP = N(6)-(dimethylallyl)adenosine 5'-phosphate + diphosphate. Transfers dimethylallyl groups to AMP as part of the biosynthesis of cytokinin phytohormones. The polypeptide is Adenylate dimethylallyltransferase (tzs) (Ralstonia solanacearum (Pseudomonas solanacearum)).